A 536-amino-acid polypeptide reads, in one-letter code: Metal transporter Nramp2 (536 aa).

The interval Met1 to Glu37 is disordered. Low complexity predominate over residues Leu22 to Ser36. The N-linked (GlcNAc...) asparagine glycan is linked to Asn38. A run of 12 helical transmembrane segments spans residues Leu76–Leu96, Ala104–Ile124, Val161–Leu181, Phe185–Leu205, Leu213–Gly233, Ala259–Val279, Val305–Phe325, Tyr347–Gln367, Ser400–Leu420, Ile435–Phe455, Ala465–Ile485, and Leu492–Val512.

It belongs to the NRAMP (TC 2.A.55) family.

The protein resides in the membrane. Its function is as follows. Probable divalent metal transporter. The protein is Metal transporter Nramp2 of Populus trichocarpa (Western balsam poplar).